Here is a 342-residue protein sequence, read N- to C-terminus: Voltage-gated hydrogen channel 1 (342 aa).

Disordered stretches follow at residues 1 to 20 (MEGD…INPN) and 74 to 102 (FNDN…SEQK). The Cytoplasmic portion of the chain corresponds to 1–148 (MEGDNCNKSR…KLRHILHSKP (148 aa)). A compositionally biased stretch (polar residues) spans 86–102 (QEQSTQNTMISMQSEQK). Residues 149–169 (IHVAIIVLVVLDSFLVVGELL) traverse the membrane as a helical segment. The Extracellular portion of the chain corresponds to 170-185 (IDLKVIIVPHGNPAPE). The helical transmembrane segment at 186-208 (ILHGFSLSILSIFMVEIALKIIA) threads the bilayer. At 209–217 (DHRHFIHHK) the chain is on the cytoplasmic side. Residues 218-238 (VEVLDAVVVVISFGVDIALIF) form a helical membrane-spanning segment. Residues 239 to 247 (VGESEALAA) are Extracellular-facing. The helical transmembrane segment at 248–268 (IGLLVILRLWRVFRIINGIIV) threads the bilayer. Topologically, residues 269–342 (TVKTKADDRV…HSTTTASADV (74 aa)) are cytoplasmic. The stretch at 271-315 (KTKADDRVHEIKKKNSELELQIHNLEEKLSQKEQDMSRLHEILRC) forms a coiled coil.

This sequence belongs to the hydrogen channel family. Homodimer.

It is found in the membrane. It localises to the cell membrane. Less sensitive to zinc ions as compared to the mammalian homologs. Its function is as follows. Mediates the voltage-dependent proton permeability of excitable membranes. Forms a proton-selective channel through which protons may pass in accordance with their electrochemical gradient. The sequence is that of Voltage-gated hydrogen channel 1 (HVCN1) from Ciona intestinalis (Transparent sea squirt).